Here is a 450-residue protein sequence, read N- to C-terminus: Probable glucan endo-1,3-beta-glucosidase eglC (450 aa).

Positions 1-18 (MQFTHLVALALALATSEA) are cleaved as a signal peptide. The active-site Proton donor is glutamate 128. N-linked (GlcNAc...) asparagine glycosylation occurs at asparagine 183. The active-site Nucleophile is the glutamate 239. N-linked (GlcNAc...) asparagine glycosylation is found at asparagine 362 and asparagine 368. Composition is skewed to low complexity over residues 377-395 (SSAISGSSSGSAAGSSGSS) and 405-420 (ASGQSSSSTGSSSAPS). Residues 377–420 (SSAISGSSSGSAAGSSGSSGSSGSGASGASGQSSSSTGSSSAPS) are disordered. Asparagine 427 is lipidated: GPI-anchor amidated asparagine. The propeptide at 428-450 (AASGLSGSICGAVVAVCLALAAL) is removed in mature form.

It belongs to the glycosyl hydrolase 17 family. Post-translationally, the GPI-anchor is attached to the protein in the endoplasmic reticulum and serves to target the protein to the cell surface. There, the glucosamine-inositol phospholipid moiety is cleaved off and the GPI-modified mannoprotein is covalently attached via its lipidless GPI glycan remnant to the 1,6-beta-glucan of the outer cell wall layer.

Its subcellular location is the cell membrane. It is found in the secreted. The protein localises to the cell wall. The enzyme catalyses Hydrolysis of (1-&gt;3)-beta-D-glucosidic linkages in (1-&gt;3)-beta-D-glucans.. Its function is as follows. Glucanases play a role in cell expansion during growth, in cell-cell fusion during mating, and in spore release during sporulation. This enzyme may be involved in beta-glucan degradation and also function biosynthetically as a transglycosylase. The polypeptide is Probable glucan endo-1,3-beta-glucosidase eglC (eglC) (Aspergillus fumigatus (strain CBS 144.89 / FGSC A1163 / CEA10) (Neosartorya fumigata)).